Consider the following 381-residue polypeptide: GDP-mannose transporter (381 aa).

Basic and acidic residues predominate over residues 1–12 (MSDDKKSDDYRV). Residues 1–28 (MSDDKKSDDYRVDMPSSRTSRAPSPIMR) are disordered. At 1-36 (MSDDKKSDDYRVDMPSSRTSRAPSPIMRPALKSAPS) the chain is on the cytoplasmic side. A helical transmembrane segment spans residues 37–57 (LTENPMAAVLAYCASSILMTV). At 58–67 (TNKYVLSGVD) the chain is on the lumenal side. Residues 68-88 (FNLNFFLLCVQSVVCVTAISI) traverse the membrane as a helical segment. The Cytoplasmic portion of the chain corresponds to 89 to 107 (CKAAGLITYRDFNTDEAKK). A helical membrane pass occupies residues 108–126 (WFPISLLLIGMIYTGTWAL). Residues 127-130 (KYLS) lie on the Lumenal side of the membrane. Residues 131–153 (IPVYTIFKNLTIILIAYGEVLWF) traverse the membrane as a helical segment. The Cytoplasmic segment spans residues 154 to 161 (GGSVTPMT). A helical membrane pass occupies residues 162 to 184 (LFSFGLMVLSSIIAAWADIQHAL). The Lumenal segment spans residues 185–199 (NSFGQQSEAANEALS). Residues 200-220 (TMHAGYLWMAFNCVCSATYLL) traverse the membrane as a helical segment. Residues 221–242 (SMRKRIKLTNFKDYDTMYYNNL) are Cytoplasmic-facing. The helical transmembrane segment at 243–263 (LTIPILLVASILVEDWSSANI) threads the bilayer. Over 264–274 (QKNFPPEQRNT) the chain is Lumenal. The chain crosses the membrane as a helical span at residues 275-295 (VIMVMVISGMSTVFISYTSAW). At 296–303 (AVRVTSST) the chain is on the cytoplasmic side. A helical transmembrane segment spans residues 304–324 (TYSMVGALNKLPIAISGLVFF). The Lumenal segment spans residues 325–327 (DAP). Residues 328–348 (VTFGSVSAIFVGFVSGIVYAV) traverse the membrane as a helical segment. The Cytoplasmic segment spans residues 349–381 (AKVRQNSKPKTVLPTTNIPLSASSRSMQDSLKA).

This sequence belongs to the TPT transporter family. SLC35D subfamily. As to quaternary structure, homooligomer.

It localises to the golgi apparatus membrane. The protein localises to the cytoplasmic vesicle membrane. The protein resides in the endoplasmic reticulum membrane. In terms of biological role, involved in the import of GDP-mannose from the cytoplasm into the Golgi lumen. The chain is GDP-mannose transporter (VRG4) from Phaeosphaeria nodorum (strain SN15 / ATCC MYA-4574 / FGSC 10173) (Glume blotch fungus).